The chain runs to 100 residues: NADH-quinone oxidoreductase subunit K 2 (100 aa).

3 helical membrane-spanning segments follow: residues 4–24, 28–48, and 60–80; these read LWWF…GVLL, ILVV…NFIA, and IFAI…LGIL.

The protein belongs to the complex I subunit 4L family. As to quaternary structure, NDH-1 is composed of 14 different subunits. Subunits NuoA, H, J, K, L, M, N constitute the membrane sector of the complex.

The protein localises to the cell inner membrane. It catalyses the reaction a quinone + NADH + 5 H(+)(in) = a quinol + NAD(+) + 4 H(+)(out). Its function is as follows. NDH-1 shuttles electrons from NADH, via FMN and iron-sulfur (Fe-S) centers, to quinones in the respiratory chain. The immediate electron acceptor for the enzyme in this species is believed to be ubiquinone. Couples the redox reaction to proton translocation (for every two electrons transferred, four hydrogen ions are translocated across the cytoplasmic membrane), and thus conserves the redox energy in a proton gradient. This is NADH-quinone oxidoreductase subunit K 2 from Rhizobium etli (strain CIAT 652).